A 398-amino-acid polypeptide reads, in one-letter code: Elongation factor Tu (398 aa).

A tr-type G domain is found at 10–207; sequence KPHVNIGTIG…TVDEYIPEPE (198 aa). Residues 19–26 form a G1 region; the sequence is GHVDHGKT. 19–26 is a binding site for GTP; sequence GHVDHGKT. A Mg(2+)-binding site is contributed by T26. Positions 63–67 are G2; it reads GITIN. A G3 region spans residues 84 to 87; the sequence is DAPG. GTP is bound by residues 84–88 and 139–142; these read DAPGH and NKVD. The tract at residues 139-142 is G4; that stretch reads NKVD. The interval 177 to 179 is G5; the sequence is SAL.

The protein belongs to the TRAFAC class translation factor GTPase superfamily. Classic translation factor GTPase family. EF-Tu/EF-1A subfamily. Monomer.

The protein resides in the cytoplasm. The enzyme catalyses GTP + H2O = GDP + phosphate + H(+). In terms of biological role, GTP hydrolase that promotes the GTP-dependent binding of aminoacyl-tRNA to the A-site of ribosomes during protein biosynthesis. The protein is Elongation factor Tu of Streptococcus suis (strain 98HAH33).